A 393-amino-acid polypeptide reads, in one-letter code: 5-azacytidine-induced protein 2 (393 aa).

The interval 1-198 is homodimerization; that stretch reads MDALVEDDIC…IELQKAKQTD (198 aa). The stretch at 40–198 forms a coiled coil; that stretch reads ALVTAYEDIK…IELQKAKQTD (159 aa). Residues 217–258 are interaction with TBK1 and IKBKE; it reads SDNMQSAYWELKREMSNLHLVTQVQAELLRKLKTPAAIKKAC. Ser319 is modified (phosphoserine). Disordered stretches follow at residues 321–340 and 345–393; these read TDHERSIPHDGTNFQEHNSY and LEDN…HYKH. Ser354 carries the phosphoserine modification. Over residues 384 to 393 the composition is skewed to polar residues; it reads QHNQNCHYKH.

In terms of assembly, homodimer. Interacts with IKBKE, TBK1 and TICAM1. Interacts with TAX1BP1. Interacts with CALCOCO2. Post-translationally, ubiquitinated via 'Lys-48'-linked polyubiquitination by TRIM38, leading to its degradation.

The protein localises to the cytoplasm. Its function is as follows. Adapter protein which binds TBK1 and IKBKE playing a role in antiviral innate immunity. Activates serine/threonine-protein kinase TBK1 and facilitates its oligomerization. Enhances the phosphorylation of NF-kappa-B p65 subunit RELA by TBK1. Promotes TBK1-induced as well as TNF-alpha or PMA-induced activation of NF-kappa-B. Participates in IFNB promoter activation via TICAM1. The sequence is that of 5-azacytidine-induced protein 2 (AZI2) from Bos taurus (Bovine).